The sequence spans 621 residues: Bifunctional 3'-phosphoadenosine 5'-phosphosulfate synthase 2 (621 aa).

The segment at 1–216 is adenylyl-sulfate kinase; that stretch reads MSANFKMNHK…VVELLQEQNI (216 aa). 53-58 contributes to the ATP binding site; sequence GAGKTT. Residues 80–83, F92, 97–100, 123–124, K162, and 175–176 contribute to the adenosine 5'-phosphosulfate site; these read DNVR, REEN, IS, and GF. Residues S198, 415–418, 517–521, and A559 contribute to the ATP site; these read QLRN and GRDPA. Residues 225–621 are sulfate adenylyltransferase; the sequence is IHELFVPENK…DYYRSLEKTN (397 aa).

It in the N-terminal section; belongs to the APS kinase family. This sequence in the C-terminal section; belongs to the sulfate adenylyltransferase family. As to expression, expressed in liver, cartilage, skin and brain.

The enzyme catalyses sulfate + ATP + H(+) = adenosine 5'-phosphosulfate + diphosphate. The catalysed reaction is adenosine 5'-phosphosulfate + ATP = 3'-phosphoadenylyl sulfate + ADP + H(+). It functions in the pathway sulfur metabolism; sulfate assimilation. In terms of biological role, bifunctional enzyme with both ATP sulfurylase and APS kinase activity, which mediates two steps in the sulfate activation pathway. The first step is the transfer of a sulfate group to ATP to yield adenosine 5'-phosphosulfate (APS), and the second step is the transfer of a phosphate group from ATP to APS yielding 3'-phosphoadenylylsulfate/PAPS, the activated sulfate donor used by sulfotransferases. In mammals, PAPS is the sole source of sulfate while APS appears to only be an intermediate in the sulfate-activation pathway. May have an important role in skeletogenesis during postnatal growth. The sequence is that of Bifunctional 3'-phosphoadenosine 5'-phosphosulfate synthase 2 (Papss2) from Mus musculus (Mouse).